The following is a 192-amino-acid chain: UPF0301 protein BMA10247_1859 (192 aa).

Belongs to the UPF0301 (AlgH) family.

This Burkholderia mallei (strain NCTC 10247) protein is UPF0301 protein BMA10247_1859.